The sequence spans 512 residues: Cytoplasmic tRNA 2-thiolation protein 2-A (512 aa).

It belongs to the CTU2/NCS2 family.

It is found in the cytoplasm. It participates in tRNA modification; 5-methoxycarbonylmethyl-2-thiouridine-tRNA biosynthesis. Functionally, plays a central role in 2-thiolation of mcm(5)S(2)U at tRNA wobble positions of tRNA(Lys), tRNA(Glu) and tRNA(Gln). May act by forming a heterodimer with ctu1/atpbd3 that ligates sulfur from thiocarboxylated urm1 onto the uridine of tRNAs at wobble position. This is Cytoplasmic tRNA 2-thiolation protein 2-A (ctu2-a) from Xenopus laevis (African clawed frog).